The following is a 42-amino-acid chain: Large ribosomal subunit protein P2 (42 aa).

It belongs to the eukaryotic ribosomal protein P1/P2 family. As to quaternary structure, P1 and P2 exist as dimers at the large ribosomal subunit. In terms of processing, phosphorylated.

Its function is as follows. Plays an important role in the elongation step of protein synthesis. This is Large ribosomal subunit protein P2 from Triticum aestivum (Wheat).